The following is a 562-amino-acid chain: Arginine--tRNA ligase (562 aa).

Positions 121–131 match the 'HIGH' region motif; the sequence is PNIAKPMGMGH.

This sequence belongs to the class-I aminoacyl-tRNA synthetase family. In terms of assembly, monomer.

It localises to the cytoplasm. The enzyme catalyses tRNA(Arg) + L-arginine + ATP = L-arginyl-tRNA(Arg) + AMP + diphosphate. This chain is Arginine--tRNA ligase, found in Limosilactobacillus fermentum (strain NBRC 3956 / LMG 18251) (Lactobacillus fermentum).